Reading from the N-terminus, the 194-residue chain is Peptidyl-tRNA hydrolase (194 aa).

Y17 is a binding site for tRNA. The active-site Proton acceptor is H22. TRNA contacts are provided by F68, N70, and N116.

The protein belongs to the PTH family. In terms of assembly, monomer.

The protein resides in the cytoplasm. The catalysed reaction is an N-acyl-L-alpha-aminoacyl-tRNA + H2O = an N-acyl-L-amino acid + a tRNA + H(+). In terms of biological role, hydrolyzes ribosome-free peptidyl-tRNAs (with 1 or more amino acids incorporated), which drop off the ribosome during protein synthesis, or as a result of ribosome stalling. Its function is as follows. Catalyzes the release of premature peptidyl moieties from peptidyl-tRNA molecules trapped in stalled 50S ribosomal subunits, and thus maintains levels of free tRNAs and 50S ribosomes. In Haemophilus influenzae (strain ATCC 51907 / DSM 11121 / KW20 / Rd), this protein is Peptidyl-tRNA hydrolase.